The sequence spans 668 residues: Ras guanine nucleotide exchange factor D (668 aa).

One can recognise a Rho-GAP domain in the interval 27–224 (KKLESIFGIA…LMVMDIDEFD (198 aa)). An N-terminal Ras-GEF domain is found at 237–362 (GESIVKAATF…YFQTFFKPVI (126 aa)). The region spanning 433 to 663 (GSNIIAQQIT…HSISHKLEPR (231 aa)) is the Ras-GEF domain.

Functionally, promotes the exchange of Ras-bound GDP by GTP. This chain is Ras guanine nucleotide exchange factor D (gefD), found in Dictyostelium discoideum (Social amoeba).